Here is a 299-residue protein sequence, read N- to C-terminus: Phosphatidylcholine-sterol acyltransferase (299 aa).

Asparagine 28 and asparagine 184 each carry an N-linked (GlcNAc...) asparagine glycan. Cysteine 225 and cysteine 268 form a disulfide bridge. Aspartate 257 functions as the Charge relay system in the catalytic mechanism. Asparagine 285 is a glycosylation site (N-linked (GlcNAc...) asparagine). The active-site Charge relay system is the histidine 289. Asparagine 296 carries N-linked (GlcNAc...) asparagine glycosylation.

It belongs to the AB hydrolase superfamily. Lipase family.

The protein localises to the secreted. The enzyme catalyses a sterol + a 1,2-diacyl-sn-glycero-3-phosphocholine = a sterol ester + a 1-acyl-sn-glycero-3-phosphocholine. Its activity is regulated as follows. APOA1 is the most potent activator in plasma. Also activated by APOE, APOC1 and APOA4. Its function is as follows. Central enzyme in the extracellular metabolism of plasma lipoproteins. Synthesized mainly in the liver and secreted into plasma where it converts cholesterol and phosphatidylcholines (lecithins) to cholesteryl esters and lysophosphatidylcholines on the surface of high and low density lipoproteins (HDLs and LDLs). The cholesterol ester is then transported back to the liver. Has a preference for plasma 16:0-18:2 or 18:O-18:2 phosphatidylcholines. Also produced in the brain by primary astrocytes, and esterifies free cholesterol on nascent APOE-containing lipoproteins secreted from glia and influences cerebral spinal fluid (CSF) APOE- and APOA1 levels. Together with APOE and the cholesterol transporter ABCA1, plays a key role in the maturation of glial-derived, nascent lipoproteins. Required for remodeling high-density lipoprotein particles into their spherical forms. The sequence is that of Phosphatidylcholine-sterol acyltransferase (LCAT) from Micromys minutus (European harvest mouse).